Reading from the N-terminus, the 124-residue chain is Fluoride-specific ion channel FluC (124 aa).

The next 4 helical transmembrane spans lie at M1–A21, T38–I58, G69–V89, and L99–L119. The Na(+) site is built by G76 and T79.

This sequence belongs to the fluoride channel Fluc/FEX (TC 1.A.43) family.

The protein localises to the cell inner membrane. It carries out the reaction fluoride(in) = fluoride(out). With respect to regulation, na(+) is not transported, but it plays an essential structural role and its presence is essential for fluoride channel function. In terms of biological role, fluoride-specific ion channel. Important for reducing fluoride concentration in the cell, thus reducing its toxicity. The chain is Fluoride-specific ion channel FluC from Pseudomonas fluorescens (strain Pf0-1).